The following is a 341-amino-acid chain: Dihydroorotate dehydrogenase (quinone) (341 aa).

Residues 61–65 (AGLDK) and Thr-85 contribute to the FMN site. Lys-65 contacts substrate. Substrate is bound at residue 110 to 114 (NRMGF). FMN-binding residues include Asn-138 and Asn-171. Residue Asn-171 coordinates substrate. Ser-174 serves as the catalytic Nucleophile. Asn-176 serves as a coordination point for substrate. The FMN site is built by Lys-216 and Thr-244. 245-246 (NT) provides a ligand contact to substrate. FMN contacts are provided by residues Gly-267, Gly-296, and 317–318 (YS).

The protein belongs to the dihydroorotate dehydrogenase family. Type 2 subfamily. In terms of assembly, monomer. It depends on FMN as a cofactor.

Its subcellular location is the cell membrane. The enzyme catalyses (S)-dihydroorotate + a quinone = orotate + a quinol. It participates in pyrimidine metabolism; UMP biosynthesis via de novo pathway; orotate from (S)-dihydroorotate (quinone route): step 1/1. Catalyzes the conversion of dihydroorotate to orotate with quinone as electron acceptor. The sequence is that of Dihydroorotate dehydrogenase (quinone) from Pseudomonas fluorescens (strain SBW25).